Reading from the N-terminus, the 361-residue chain is Peptide chain release factor 1 (361 aa).

Gln235 bears the N5-methylglutamine mark.

The protein belongs to the prokaryotic/mitochondrial release factor family. In terms of processing, methylated by PrmC. Methylation increases the termination efficiency of RF1.

Its subcellular location is the cytoplasm. Functionally, peptide chain release factor 1 directs the termination of translation in response to the peptide chain termination codons UAG and UAA. The chain is Peptide chain release factor 1 from Chlamydia felis (strain Fe/C-56) (Chlamydophila felis).